The chain runs to 479 residues: Membrane-bound lytic murein transglycosylase F (479 aa).

A signal peptide spans 1-15; sequence MKRLLLVLCYITLLA. Residues 16-258 are non-LT domain; the sequence is GCQKVVVEQE…HLNEKYFAHV (243 aa). The interval 260 to 479 is LT domain; it reads RFDYVDTRAF…QTDAIQPQQP (220 aa). E303 is a catalytic residue. Residues 457 to 479 form a disordered region; that stretch reads LQTAEAKETEEKPQTDAIQPQQP. Basic and acidic residues predominate over residues 461–470; it reads EAKETEEKPQ.

It in the N-terminal section; belongs to the bacterial solute-binding protein 3 family. The protein in the C-terminal section; belongs to the transglycosylase Slt family.

The protein resides in the cell outer membrane. The enzyme catalyses Exolytic cleavage of the (1-&gt;4)-beta-glycosidic linkage between N-acetylmuramic acid (MurNAc) and N-acetylglucosamine (GlcNAc) residues in peptidoglycan, from either the reducing or the non-reducing ends of the peptidoglycan chains, with concomitant formation of a 1,6-anhydrobond in the MurNAc residue.. Murein-degrading enzyme that degrades murein glycan strands and insoluble, high-molecular weight murein sacculi, with the concomitant formation of a 1,6-anhydromuramoyl product. Lytic transglycosylases (LTs) play an integral role in the metabolism of the peptidoglycan (PG) sacculus. Their lytic action creates space within the PG sacculus to allow for its expansion as well as for the insertion of various structures such as secretion systems and flagella. This chain is Membrane-bound lytic murein transglycosylase F, found in Shewanella pealeana (strain ATCC 700345 / ANG-SQ1).